The sequence spans 419 residues: 3-isopropylmalate dehydratase large subunit (419 aa).

[4Fe-4S] cluster-binding residues include cysteine 300, cysteine 360, and cysteine 363.

Belongs to the aconitase/IPM isomerase family. LeuC type 2 subfamily. In terms of assembly, heterodimer of LeuC and LeuD. Requires [4Fe-4S] cluster as cofactor.

It catalyses the reaction (2R,3S)-3-isopropylmalate = (2S)-2-isopropylmalate. Its pathway is amino-acid biosynthesis; L-leucine biosynthesis; L-leucine from 3-methyl-2-oxobutanoate: step 2/4. Its function is as follows. Catalyzes the isomerization between 2-isopropylmalate and 3-isopropylmalate, via the formation of 2-isopropylmaleate. This Nitratidesulfovibrio vulgaris (strain ATCC 29579 / DSM 644 / CCUG 34227 / NCIMB 8303 / VKM B-1760 / Hildenborough) (Desulfovibrio vulgaris) protein is 3-isopropylmalate dehydratase large subunit.